A 290-amino-acid polypeptide reads, in one-letter code: uncharacterized protein (290 aa).

7 consecutive transmembrane segments (helical) span residues Met-40–Ile-60, Asp-80–Leu-100, Leu-110–Trp-130, Val-139–Phe-159, Met-166–Leu-188, Met-200–Phe-220, and Trp-238–Ser-260. The 198-residue stretch at Lys-74–His-271 folds into the TLC domain.

Its subcellular location is the endoplasmic reticulum membrane. This is an uncharacterized protein from Schizosaccharomyces pombe (strain 972 / ATCC 24843) (Fission yeast).